Consider the following 243-residue polypeptide: Proteasome subunit beta (243 aa).

Residues 1–40 (MRTPMNNDISGRPDSLNGDRSDVFSPELGEFPNADDRAND) are disordered. The propeptide at 1-49 (MRTPMNNDISGRPDSLNGDRSDVFSPELGEFPNADDRANDIGDMETKTG) is removed in mature form; by autocatalysis. T50 functions as the Nucleophile in the catalytic mechanism.

Belongs to the peptidase T1B family. As to quaternary structure, the 20S proteasome core is composed of 14 alpha and 14 beta subunits that assemble into four stacked heptameric rings, resulting in a barrel-shaped structure. The two inner rings, each composed of seven catalytic beta subunits, are sandwiched by two outer rings, each composed of seven alpha subunits. The catalytic chamber with the active sites is on the inside of the barrel. Has a gated structure, the ends of the cylinder being occluded by the N-termini of the alpha-subunits. Is capped at one or both ends by the proteasome regulatory ATPase, PAN.

Its subcellular location is the cytoplasm. It carries out the reaction Cleavage of peptide bonds with very broad specificity.. Its activity is regulated as follows. The formation of the proteasomal ATPase PAN-20S proteasome complex, via the docking of the C-termini of PAN into the intersubunit pockets in the alpha-rings, triggers opening of the gate for substrate entry. Interconversion between the open-gate and close-gate conformations leads to a dynamic regulation of the 20S proteasome proteolysis activity. Component of the proteasome core, a large protease complex with broad specificity involved in protein degradation. In Haloquadratum walsbyi (strain DSM 16790 / HBSQ001), this protein is Proteasome subunit beta.